Here is a 317-residue protein sequence, read N- to C-terminus: 2-keto-3-deoxygluconate permease 1 (317 aa).

Transmembrane regions (helical) follow at residues V10–P30, A47–A67, L82–F102, G106–G126, V134–G154, A159–L179, P195–L215, G217–I237, I248–A268, and A279–L299.

Belongs to the KdgT transporter family.

It localises to the cell inner membrane. The enzyme catalyses 2-dehydro-3-deoxy-D-gluconate(in) + H(+)(in) = 2-dehydro-3-deoxy-D-gluconate(out) + H(+)(out). Its function is as follows. Catalyzes the proton-dependent uptake of 2-keto-3-deoxygluconate (KDG) into the cell. In Salmonella typhi, this protein is 2-keto-3-deoxygluconate permease 1.